A 433-amino-acid polypeptide reads, in one-letter code: uncharacterized protein (433 aa).

Residues 104–349 (ERGRNIIQVR…ELEYKKKGIE (246 aa)) enclose the Radical SAM core domain. Residues Cys-118, Cys-122, and Cys-125 each coordinate [4Fe-4S] cluster. S-adenosyl-L-methionine is bound by residues 171–172 (GE) and 236–238 (MLS). The region spanning 370–433 (PFKVGEVTKV…KDNIIVAELV (64 aa)) is the TRAM domain.

This sequence belongs to the radical SAM superfamily. The cofactor is [4Fe-4S] cluster.

This is an uncharacterized protein from Methanocaldococcus jannaschii (strain ATCC 43067 / DSM 2661 / JAL-1 / JCM 10045 / NBRC 100440) (Methanococcus jannaschii).